The sequence spans 323 residues: MAPKQDPKPKFQEGERVLCFHGPLLYEAKCVKVAIKDKQVKYFIHHSGWNKNWDEWVPESRVLKYVDTNLQKQRELQKANQEQYAEGKMRGAAPGKKTSGLQQKNVDVKTKKNKQKTPGNGDGGSTSETPQPPRKKRARVDPTVENEETFMNRVEVKVKIPEELKPWLVDDWDLITRQKQLFYLPAKKNVDSILEDYANYKKSRGNTDNKEYAVNEVVAGIKEYFNVMLGTQLLYKFERPQYAEILADHPDAPMSQVYGAPHLLRLFVRIGAMLAYTPLDEKSLALLLNYLHDFLKYLAKNSATLFSASDYEVAPPEYHRKAV.

Residues Gln-12 to Val-62 enclose the Tudor-knot domain. A disordered region spans residues Leu-76 to Thr-143. The sufficient for interaction with SIN3A stretch occupies residues Pro-94–Val-227. Positions Lys-96–Asp-107 match the Nuclear localization signal motif. At Lys-104 the chain carries N6-acetyllysine. An interaction with RB1-1 region spans residues Ser-125–Asp-191. The segment at Thr-149–Ala-303 is sufficient for interaction with PHF12. In terms of domain architecture, MRG spans Asn-152–Val-323. The interaction with RB1-2 stretch occupies residues Leu-284–Leu-305.

As to quaternary structure, component of the NuA4 histone acetyltransferase complex which contains the catalytic subunit KAT5/TIP60 and the subunits EP400, TRRAP/PAF400, BRD8/SMAP, EPC1, DMAP1/DNMAP1, RUVBL1/TIP49, RUVBL2, ING3, actin, ACTL6A/BAF53A, MORF4L1/MRG15, MORF4L2/MRGX, MRGBP, YEATS4/GAS41, VPS72/YL1 and MEAF6. The NuA4 complex interacts with MYC and the adenovirus E1A protein. MORF4L1 may also participate in the formation of NuA4 related complexes which lack the KAT5/TIP60 catalytic subunit, but which include the SWI/SNF related protein SRCAP. Component of the mSin3A histone deacetylase complex, which includes SIN3A, HDAC2, ARID4B, MORF4L1, RBBP4/RbAp48, and RBBP7/RbAp46. May also interact with PHF12 and one or more as yet undefined members of the TLE (transducin-like enhancer of split) family of transcriptional repressors. Component of the SIN3B complex, which includes SIN3B, HDAC2 or HDAC1, PHF12 and MORF4L1. Interacts with RB1 and KAT8. Interacts with the N-terminus of MRFAP1. Found in a complex composed of MORF4L1, MRFAP1 and RB1. Interacts with the entire BRCA complex, which contains BRCA1, PALB2, BRCA2 and RAD51. Interacts with PALB2. Forms a complex with MSL1 and NUPR1.

It localises to the nucleus. In terms of biological role, component of the NuA4 histone acetyltransferase (HAT) complex which is involved in transcriptional activation of select genes principally by acetylation of nucleosomal histones H4 and H2A. This modification may both alter nucleosome - DNA interactions and promote interaction of the modified histones with other proteins which positively regulate transcription. This complex may be required for the activation of transcriptional programs associated with oncogene and proto-oncogene mediated growth induction, tumor suppressor mediated growth arrest and replicative senescence, apoptosis, and DNA repair. The NuA4 complex ATPase and helicase activities seem to be, at least in part, contributed by the association of RUVBL1 and RUVBL2 with EP400. NuA4 may also play a direct role in DNA repair when directly recruited to sites of DNA damage. As part of the SIN3B complex represses transcription and counteracts the histone acetyltransferase activity of EP300 through the recognition H3K27ac marks by PHF12 and the activity of the histone deacetylase HDAC2. SIN3B complex is recruited downstream of the constitutively active genes transcriptional start sites through interaction with histones and mitigates histone acetylation and RNA polymerase II progression within transcribed regions contributing to the regulation of transcription. Required for homologous recombination repair (HRR) and resistance to mitomycin C (MMC). Involved in the localization of PALB2, BRCA2 and RAD51, but not BRCA1, to DNA-damage foci. The chain is Mortality factor 4-like protein 1 (MORF4L1) from Pongo abelii (Sumatran orangutan).